A 257-amino-acid polypeptide reads, in one-letter code: Acetylglutamate kinase (257 aa).

Residues 43–44 (GG), arginine 65, and asparagine 157 each bind substrate. Residues 180–185 (DVSGIL) and 208–210 (IIT) each bind ATP.

The protein belongs to the acetylglutamate kinase family. ArgB subfamily. As to quaternary structure, homodimer.

The protein resides in the cytoplasm. The catalysed reaction is N-acetyl-L-glutamate + ATP = N-acetyl-L-glutamyl 5-phosphate + ADP. It participates in amino-acid biosynthesis; L-arginine biosynthesis; N(2)-acetyl-L-ornithine from L-glutamate: step 2/4. In terms of biological role, catalyzes the ATP-dependent phosphorylation of N-acetyl-L-glutamate. The protein is Acetylglutamate kinase of Salmonella schwarzengrund (strain CVM19633).